The following is a 258-amino-acid chain: Probable S-methyl-5'-thioinosine phosphorylase (258 aa).

Phosphate is bound at residue 53–54; that stretch reads RH. Met-180 serves as a coordination point for substrate. Thr-181 contributes to the phosphate binding site. Substrate is bound at residue 204 to 206; the sequence is NQA.

The protein belongs to the PNP/MTAP phosphorylase family. MTAP subfamily. Homotrimer.

The catalysed reaction is S-methyl-5'-thioinosine + phosphate = 5-(methylsulfanyl)-alpha-D-ribose 1-phosphate + hypoxanthine. It functions in the pathway purine metabolism; purine nucleoside salvage. Functionally, catalyzes the reversible phosphorylation of S-methyl-5'-thioinosine (MTI) to hypoxanthine and 5-methylthioribose-1-phosphate. Involved in the breakdown of S-methyl-5'-thioadenosine (MTA), a major by-product of polyamine biosynthesis. Catabolism of (MTA) occurs via deamination to MTI and phosphorolysis to hypoxanthine. The chain is Probable S-methyl-5'-thioinosine phosphorylase from Methanosarcina acetivorans (strain ATCC 35395 / DSM 2834 / JCM 12185 / C2A).